Reading from the N-terminus, the 122-residue chain is MFLTFSMCVNWIIVKMPNRSEELDRLLDKIINSPHRTEASKTLQEIENNQSYILNVQLKKLLRLHDDSFKNKCVSPINYMLEKYTPYMGHTEALQKEAELVDRDLRILEMTYQLIEKNRNSK.

Serine 33 bears the Phosphoserine mark.

This sequence belongs to the BLOC1S1 family. As to quaternary structure, component of the biogenesis of lysosome-related organelles complex-1 (BLOC-1) composed of at least BLI1, BLS1, CNL1, KXD1, SNN1 and VAB2.

It localises to the endosome. Component of the biogenesis of lysosome-related organelles complex-1 (BLOC-1), a complex involved in endosomal cargo sorting. This Saccharomyces cerevisiae (strain RM11-1a) (Baker's yeast) protein is Biogenesis of lysosome-related organelles complex 1 subunit BLS1 (BLS1).